A 320-amino-acid polypeptide reads, in one-letter code: TPR repeat-containing protein MJ0263 (320 aa).

9 TPR repeats span residues 12–45, 46–79, 80–113, 114–147, 148–181, 182–215, 216–249, 250–283, and 289–320; these read ILKD…DKDN, PLVL…EGTS, LLSL…SKPC, YLSP…YPNL, TSIL…KKDD, AHAW…NENL, VHVY…FPND, VEAK…KNVK, and KSSI…DNNI.

The chain is TPR repeat-containing protein MJ0263 from Methanocaldococcus jannaschii (strain ATCC 43067 / DSM 2661 / JAL-1 / JCM 10045 / NBRC 100440) (Methanococcus jannaschii).